The primary structure comprises 209 residues: Putative AgrB-like protein (209 aa).

The next 5 membrane-spanning stretches (helical) occupy residues 49-71 (ILFL…AAFG), 82-102 (AKNS…GAYL), 105-125 (YLLF…LLLF), 149-169 (QAVL…DELI), and 173-193 (ISLS…KVLG).

Belongs to the AgrB family.

It localises to the cell membrane. May be involved in the proteolytic processing of a quorum sensing system signal molecule precursor. The protein is Putative AgrB-like protein of Clostridium acetobutylicum (strain ATCC 824 / DSM 792 / JCM 1419 / IAM 19013 / LMG 5710 / NBRC 13948 / NRRL B-527 / VKM B-1787 / 2291 / W).